Here is an 86-residue protein sequence, read N- to C-terminus: Insulin (86 aa).

3 disulfides stabilise this stretch: C7/C72, C19/C85, and C71/C76. A propeptide spans 33–63 (EAEDPQVGEVELGGGPGLGGLQPLALAGPQQ) (c peptide).

Belongs to the insulin family. Heterodimer of a B chain and an A chain linked by two disulfide bonds.

The protein localises to the secreted. Insulin decreases blood glucose concentration. It increases cell permeability to monosaccharides, amino acids and fatty acids. It accelerates glycolysis, the pentose phosphate cycle, and glycogen synthesis in liver. This Equus caballus (Horse) protein is Insulin (INS).